The chain runs to 601 residues: DNA ligase (601 aa).

Position 258 (Asp258) interacts with ATP. Lys260 (N6-AMP-lysine intermediate) is an active-site residue. ATP-binding residues include Arg265, Arg280, Glu310, Phe350, Arg427, and Lys433.

Belongs to the ATP-dependent DNA ligase family. Interacts with the PCNA heterotrimer, probably via subunit PCNA3. Requires a divalent metal cation as cofactor.

It carries out the reaction ATP + (deoxyribonucleotide)n-3'-hydroxyl + 5'-phospho-(deoxyribonucleotide)m = (deoxyribonucleotide)n+m + AMP + diphosphate.. With respect to regulation, ligase activity stimulated by PCNA heterotrimer. Its function is as follows. DNA ligase that seals nicks in double-stranded DNA during DNA replication, DNA recombination and DNA repair. Interaction with PCNA enhances ligase activity. DNA polymerase I, DNA ligase and the flap endonuclease may be constitutively associated with the PCNA heterotrimer forming a scanning complex able to couple DNA synthesis and Okazaki fragment maturation. This chain is DNA ligase, found in Saccharolobus solfataricus (strain ATCC 35092 / DSM 1617 / JCM 11322 / P2) (Sulfolobus solfataricus).